A 205-amino-acid polypeptide reads, in one-letter code: Small ribosomal subunit protein uS4 (205 aa).

An S4 RNA-binding domain is found at 110–172 (RRLQTIIYRK…VGSPITKEKL (63 aa)). Residues 173–205 (MAKPQPASAPKAAAAPKAAAAPAEAAAAPKKEE) are disordered. Low complexity predominate over residues 174 to 205 (AKPQPASAPKAAAAPKAAAAPAEAAAAPKKEE).

This sequence belongs to the universal ribosomal protein uS4 family. As to quaternary structure, part of the 30S ribosomal subunit. Contacts protein S5. The interaction surface between S4 and S5 is involved in control of translational fidelity.

In terms of biological role, one of the primary rRNA binding proteins, it binds directly to 16S rRNA where it nucleates assembly of the body of the 30S subunit. Its function is as follows. With S5 and S12 plays an important role in translational accuracy. This is Small ribosomal subunit protein uS4 from Methanocella arvoryzae (strain DSM 22066 / NBRC 105507 / MRE50).